Reading from the N-terminus, the 271-residue chain is Formamidopyrimidine-DNA glycosylase (271 aa).

The active-site Schiff-base intermediate with DNA is P2. Residue E3 is the Proton donor of the active site. The Proton donor; for beta-elimination activity role is filled by K57. Residues H90, R109, and K151 each coordinate DNA. An FPG-type zinc finger spans residues 236–270 (HVYGRGGETCTQCGNLLSEIRLGQRTTVFCGICQT). R260 serves as the catalytic Proton donor; for delta-elimination activity.

The protein belongs to the FPG family. In terms of assembly, monomer. Requires Zn(2+) as cofactor.

It catalyses the reaction Hydrolysis of DNA containing ring-opened 7-methylguanine residues, releasing 2,6-diamino-4-hydroxy-5-(N-methyl)formamidopyrimidine.. It carries out the reaction 2'-deoxyribonucleotide-(2'-deoxyribose 5'-phosphate)-2'-deoxyribonucleotide-DNA = a 3'-end 2'-deoxyribonucleotide-(2,3-dehydro-2,3-deoxyribose 5'-phosphate)-DNA + a 5'-end 5'-phospho-2'-deoxyribonucleoside-DNA + H(+). Involved in base excision repair of DNA damaged by oxidation or by mutagenic agents. Acts as a DNA glycosylase that recognizes and removes damaged bases. Has a preference for oxidized purines, such as 7,8-dihydro-8-oxoguanine (8-oxoG). Has AP (apurinic/apyrimidinic) lyase activity and introduces nicks in the DNA strand. Cleaves the DNA backbone by beta-delta elimination to generate a single-strand break at the site of the removed base with both 3'- and 5'-phosphates. The chain is Formamidopyrimidine-DNA glycosylase from Shewanella sp. (strain MR-7).